A 408-amino-acid polypeptide reads, in one-letter code: Glutamate N-acetyltransferase (408 aa).

Residues threonine 150, lysine 176, threonine 189, glutamate 271, asparagine 403, and threonine 408 each coordinate substrate. The active-site Nucleophile is threonine 189.

It belongs to the ArgJ family. Heterotetramer of two alpha and two beta chains.

The protein resides in the cytoplasm. The catalysed reaction is N(2)-acetyl-L-ornithine + L-glutamate = N-acetyl-L-glutamate + L-ornithine. It participates in amino-acid biosynthesis; L-arginine biosynthesis; L-ornithine and N-acetyl-L-glutamate from L-glutamate and N(2)-acetyl-L-ornithine (cyclic): step 1/1. Functionally, catalyzes the transfer of the acetyl group from N(2)-acetylornithine to glutamate, forming N-acetylglutamate and L-ornithine. This chain is Glutamate N-acetyltransferase, found in Methanococcus maripaludis (strain C5 / ATCC BAA-1333).